The sequence spans 162 residues: 2-amino-4-hydroxy-6-hydroxymethyldihydropteridine pyrophosphokinase (162 aa).

It belongs to the HPPK family.

The catalysed reaction is 6-hydroxymethyl-7,8-dihydropterin + ATP = (7,8-dihydropterin-6-yl)methyl diphosphate + AMP + H(+). The protein operates within cofactor biosynthesis; tetrahydrofolate biosynthesis; 2-amino-4-hydroxy-6-hydroxymethyl-7,8-dihydropteridine diphosphate from 7,8-dihydroneopterin triphosphate: step 4/4. In terms of biological role, catalyzes the transfer of pyrophosphate from adenosine triphosphate (ATP) to 6-hydroxymethyl-7,8-dihydropterin, an enzymatic step in folate biosynthesis pathway. The polypeptide is 2-amino-4-hydroxy-6-hydroxymethyldihydropteridine pyrophosphokinase (folK) (Pseudomonas aeruginosa (strain ATCC 15692 / DSM 22644 / CIP 104116 / JCM 14847 / LMG 12228 / 1C / PRS 101 / PAO1)).